A 1111-amino-acid chain; its full sequence is Lon protease homolog, mitochondrial (1111 aa).

A mitochondrion-targeting transit peptide spans methionine 1–asparagine 21. Disordered stretches follow at residues isoleucine 85–proline 177 and proline 288–glutamate 311. Basic and acidic residues predominate over residues lysine 88–glutamate 125. A compositionally biased stretch (polar residues) spans threonine 126–glutamate 135. Residues glycine 145 to asparagine 167 are compositionally biased toward gly residues. In terms of domain architecture, Lon N-terminal spans valine 185–leucine 450. The span at asparagine 294–glycine 306 shows a compositional bias: basic and acidic residues. An ATP-binding site is contributed by glycine 602–threonine 609. Composition is skewed to basic and acidic residues over residues glutamate 819–glutamate 835 and glutamate 853–glycine 865. A disordered region spans residues glutamate 819–serine 866. The 187-residue stretch at serine 899–aspartate 1085 folds into the Lon proteolytic domain. Residues serine 991 and lysine 1034 contribute to the active site.

It belongs to the peptidase S16 family. Homohexamer or homoheptamer. Organized in a ring with a central cavity.

It localises to the mitochondrion matrix. The catalysed reaction is Hydrolysis of proteins in presence of ATP.. In terms of biological role, ATP-dependent serine protease that mediates the selective degradation of misfolded, unassembled or oxidatively damaged polypeptides as well as certain short-lived regulatory proteins in the mitochondrial matrix. May also have a chaperone function in the assembly of inner membrane protein complexes. Participates in the regulation of mitochondrial gene expression and in the maintenance of the integrity of the mitochondrial genome. Binds to mitochondrial DNA in a site-specific manner. This is Lon protease homolog, mitochondrial from Kluyveromyces lactis (strain ATCC 8585 / CBS 2359 / DSM 70799 / NBRC 1267 / NRRL Y-1140 / WM37) (Yeast).